We begin with the raw amino-acid sequence, 351 residues long: Outer membrane protein A (351 aa).

An N-terminal signal peptide occupies residues 1–21 (MKKTAIAIAVALAGFATVAQA). Transmembrane regions (beta stranded) follow at residues 27–37 (TWYTGAKLGWS), 55–66 (QLGAGAFGGYQV), 70–78 (VGFEMGYDW), 96–107 (QGVQLTAKLGYP), 112–120 (LDIYTRLGG), 147–156 (PVFAGGVEWA), 161–168 (IATRLEYQ), and 187–195 (LLSLGVSYR). 4 tandem repeats follow at residues 206–207 (AP), 208–209 (AP), 210–211 (AP), and 212–213 (AP). The 4 X 2 AA tandem repeats of A-P stretch occupies residues 206–213 (APAPAPAP). Residues 215-343 (VQTKHFTLKS…RVEIEVKGIK (129 aa)) enclose the OmpA-like domain. A disulfide bridge links C316 with C328.

The protein belongs to the outer membrane OOP (TC 1.B.6) superfamily. OmpA family. Monomer and homodimer.

It is found in the cell outer membrane. In terms of biological role, with TolR probably plays a role in maintaining the position of the peptidoglycan cell wall in the periplasm. Acts as a porin with low permeability that allows slow penetration of small solutes; an internal gate slows down solute passage. Functionally, required for conjugation with F-type plasmids; probably serves as the mating receptor on recipient cells. The polypeptide is Outer membrane protein A (Escherichia fergusonii (strain ATCC 35469 / DSM 13698 / CCUG 18766 / IAM 14443 / JCM 21226 / LMG 7866 / NBRC 102419 / NCTC 12128 / CDC 0568-73)).